The primary structure comprises 307 residues: 2-dehydropantoate 2-reductase (307 aa).

NADP(+)-binding positions include 7 to 12 (GSGAMG), Asn-102, and Ala-128. Asn-102 serves as a coordination point for substrate. The Proton donor role is filled by Lys-184. The substrate site is built by Asn-188, Asn-192, and Ser-255. Glu-268 serves as a coordination point for NADP(+).

Belongs to the ketopantoate reductase family.

It localises to the cytoplasm. The catalysed reaction is (R)-pantoate + NADP(+) = 2-dehydropantoate + NADPH + H(+). The protein operates within cofactor biosynthesis; (R)-pantothenate biosynthesis; (R)-pantoate from 3-methyl-2-oxobutanoate: step 2/2. Its function is as follows. Catalyzes the NADPH-dependent reduction of ketopantoate into pantoic acid. This is 2-dehydropantoate 2-reductase (apbA) from Streptococcus pyogenes serotype M18 (strain MGAS8232).